The sequence spans 273 residues: Rhamnulose-1-phosphate aldolase (273 aa).

Residue Glu-117 is part of the active site. 3 residues coordinate Zn(2+): His-140, His-142, and His-211.

It belongs to the aldolase class II family. RhaD subfamily. Zn(2+) serves as cofactor.

Its subcellular location is the cytoplasm. The enzyme catalyses L-rhamnulose 1-phosphate = (S)-lactaldehyde + dihydroxyacetone phosphate. Its pathway is carbohydrate degradation; L-rhamnose degradation; glycerone phosphate from L-rhamnose: step 3/3. Catalyzes the reversible cleavage of L-rhamnulose-1-phosphate to dihydroxyacetone phosphate (DHAP) and L-lactaldehyde. The chain is Rhamnulose-1-phosphate aldolase from Listeria monocytogenes serotype 4b (strain CLIP80459).